Here is a 424-residue protein sequence, read N- to C-terminus: Enolase (424 aa).

Gln-162 is a (2R)-2-phosphoglycerate binding site. Glu-204 serves as the catalytic Proton donor. Mg(2+) contacts are provided by Asp-241, Glu-284, and Asp-311. Lys-336, Arg-365, Ser-366, and Lys-387 together coordinate (2R)-2-phosphoglycerate. Lys-336 (proton acceptor) is an active-site residue.

It belongs to the enolase family. It depends on Mg(2+) as a cofactor.

The protein localises to the cytoplasm. Its subcellular location is the secreted. It is found in the cell surface. It catalyses the reaction (2R)-2-phosphoglycerate = phosphoenolpyruvate + H2O. It functions in the pathway carbohydrate degradation; glycolysis; pyruvate from D-glyceraldehyde 3-phosphate: step 4/5. Functionally, catalyzes the reversible conversion of 2-phosphoglycerate (2-PG) into phosphoenolpyruvate (PEP). It is essential for the degradation of carbohydrates via glycolysis. This is Enolase from Agrobacterium fabrum (strain C58 / ATCC 33970) (Agrobacterium tumefaciens (strain C58)).